We begin with the raw amino-acid sequence, 118 residues long: Small ribosomal subunit protein uS13 (118 aa).

Residues H91 to K118 are disordered.

This sequence belongs to the universal ribosomal protein uS13 family. Part of the 30S ribosomal subunit. Forms a loose heterodimer with protein S19. Forms two bridges to the 50S subunit in the 70S ribosome.

Located at the top of the head of the 30S subunit, it contacts several helices of the 16S rRNA. In the 70S ribosome it contacts the 23S rRNA (bridge B1a) and protein L5 of the 50S subunit (bridge B1b), connecting the 2 subunits; these bridges are implicated in subunit movement. Contacts the tRNAs in the A and P-sites. In Marinomonas sp. (strain MWYL1), this protein is Small ribosomal subunit protein uS13.